A 276-amino-acid polypeptide reads, in one-letter code: 3-methyl-2-oxobutanoate hydroxymethyltransferase (276 aa).

Mg(2+) is bound by residues aspartate 44 and aspartate 83. Residues 44-45, aspartate 83, and lysine 113 contribute to the 3-methyl-2-oxobutanoate site; that span reads DS. Glutamate 115 provides a ligand contact to Mg(2+). The active-site Proton acceptor is the glutamate 182.

The protein belongs to the PanB family. Homodecamer; pentamer of dimers. The cofactor is Mg(2+).

It is found in the cytoplasm. It catalyses the reaction 3-methyl-2-oxobutanoate + (6R)-5,10-methylene-5,6,7,8-tetrahydrofolate + H2O = 2-dehydropantoate + (6S)-5,6,7,8-tetrahydrofolate. It functions in the pathway cofactor biosynthesis; (R)-pantothenate biosynthesis; (R)-pantoate from 3-methyl-2-oxobutanoate: step 1/2. Functionally, catalyzes the reversible reaction in which hydroxymethyl group from 5,10-methylenetetrahydrofolate is transferred onto alpha-ketoisovalerate to form ketopantoate. This chain is 3-methyl-2-oxobutanoate hydroxymethyltransferase, found in Clostridium acetobutylicum (strain ATCC 824 / DSM 792 / JCM 1419 / IAM 19013 / LMG 5710 / NBRC 13948 / NRRL B-527 / VKM B-1787 / 2291 / W).